We begin with the raw amino-acid sequence, 641 residues long: UPF0329 protein ECU11_0030 (641 aa).

Positions 358-387 (RQRKREEETERSVKELVGDEEKAKSKEEKA) are enriched in basic and acidic residues. The interval 358-444 (RQRKREEETE…KGGKKKSKGG (87 aa)) is disordered. Over residues 435–444 (KGGKKKSKGG) the composition is skewed to basic residues.

This sequence belongs to the UPF0329 family.

This Encephalitozoon cuniculi (strain GB-M1) (Microsporidian parasite) protein is UPF0329 protein ECU11_0030.